The chain runs to 1550 residues: Cellulose synthase 1 (1550 aa).

Residues 1–741 (MPEVRSSTQS…KERVLKGTVK (741 aa)) are catalytic. 3 helical membrane passes run 26 to 46 (GAGLTIGVFGLCALIAATSVT), 47 to 67 (LPPEQQLIVAFVCVVIFFIVG), and 106 to 126 (GLLGTMLLVAELYALMMLFLS). A catalytic subdomain A region spans residues 147 to 240 (EWPTVDIFVP…YILIFDCDHV (94 aa)). Asp189 is a catalytic residue. Residues Asp236 and Asp238 each coordinate substrate. Positions 317–377 (TAIEQIGGFA…GQRVRWARGM (61 aa)) are catalytic subdomain B. Residue Asp333 is part of the active site. 5 consecutive transmembrane segments (helical) span residues 398–418 (LCYLSAMTSFLFAVPRVIFLS), 423–443 (FLFFGQNIIAASPLALLAYAI), 468–488 (VYETTMALFLVRVTIVTLLSP), 507–527 (FDLGAVYPNIILGLIMFGGLA), and 547–567 (LLNSAWAMLSLIIILAAIAVG). Residues 572–647 (QKRNSHRIPA…PARIIRAGNG (76 aa)) enclose the PilZ domain. Disordered regions lie at residues 711–734 (SSPTKPLAGNALSDDTNNPSRKER) and 768–813 (APAH…QPLA). The interval 742–1550 (MVSLLALLTF…KQLEDERRKS (809 aa)) is cyclic di-GMP binding domain. A compositionally biased stretch (low complexity) spans 768–796 (APAHQPEASDLPPLPALLPATSGAAQAGA). Residues 1513-1533 (VLLVGLLGCILIVSVLARALA) form a helical membrane-spanning segment.

The protein in the N-terminal section; belongs to the glycosyltransferase 2 family. This sequence in the C-terminal section; belongs to the AcsB/BcsB family. Mg(2+) is required as a cofactor.

The protein localises to the cell inner membrane. The enzyme catalyses [(1-&gt;4)-beta-D-glucosyl](n) + UDP-alpha-D-glucose = [(1-&gt;4)-beta-D-glucosyl](n+1) + UDP + H(+). It participates in glycan metabolism; bacterial cellulose biosynthesis. With respect to regulation, activated by c-di-GMP. Bifunctional protein comprised of a catalytic subunit and a regulatory subunit. The catalytic subunit of cellulose synthase polymerizes uridine 5'-diphosphate glucose to cellulose in a processive way. The thick cellulosic mats generated by this enzyme probably provide a specialized protective environment to the bacterium. The regulatory subunit binds bis-(3'-5') cyclic diguanylic acid (c-di-GMP). The polypeptide is Cellulose synthase 1 (acsAB) (Komagataeibacter xylinus (Gluconacetobacter xylinus)).